The primary structure comprises 159 residues: Protein B1 (159 aa).

The segment covering 1–15 (MQKNMKTKKTKKRGR) has biased composition (basic residues). Disordered stretches follow at residues 1-100 (MQKN…RTRE) and 133-159 (PGHG…DPPR). Residues 16–31 (KEGNTPETERRMEPAR) are compositionally biased toward basic and acidic residues. Residues 85–96 (RGRHIHTRGART) show a composition bias toward basic residues.

The protein is Protein B1 (B1) of Human herpesvirus 6B (strain Z29) (HHV-6 variant B).